Consider the following 172-residue polypeptide: Peptidyl-prolyl cis-trans isomerase (172 aa).

Positions 7–170 (FFDMTVGGAP…KVVKVADCGQ (164 aa)) constitute a PPIase cyclophilin-type domain.

This sequence belongs to the cyclophilin-type PPIase family.

It is found in the cytoplasm. It catalyses the reaction [protein]-peptidylproline (omega=180) = [protein]-peptidylproline (omega=0). Binds cyclosporin A (CsA). CsA mediates some of its effects via an inhibitory action on PPIase. In terms of biological role, PPIases accelerate the folding of proteins. It catalyzes the cis-trans isomerization of proline imidic peptide bonds in oligopeptides. This chain is Peptidyl-prolyl cis-trans isomerase (CYP), found in Zea mays (Maize).